A 155-amino-acid polypeptide reads, in one-letter code: Small ribosomal subunit protein uS7c (155 aa).

Belongs to the universal ribosomal protein uS7 family. As to quaternary structure, part of the 30S ribosomal subunit.

It is found in the plastid. Its subcellular location is the chloroplast. One of the primary rRNA binding proteins, it binds directly to 16S rRNA where it nucleates assembly of the head domain of the 30S subunit. The protein is Small ribosomal subunit protein uS7c (rps7) of Cryptomeria japonica (Japanese cedar).